Consider the following 699-residue polypeptide: Auxin response factor 10 (699 aa).

Disordered regions lie at residues 108–136 (AAEARREEENSRPRPTSFAKTLTQSDANN), 505–533 (TDLTIGSPGKPDDAACSPSSGGKKIDDTK), and 551–595 (KNGN…SWSL). Basic and acidic residues predominate over residues 110–119 (EARREEENSR). Positions 125 to 135 (FAKTLTQSDAN) are enriched in polar residues. The TF-B3 DNA-binding region spans 125–227 (FAKTLTQSDA…NIHVGLRRAK (103 aa)). A compositionally biased stretch (polar residues) spans 570 to 593 (PNTSEGSDSGVTQGSPTKNTTPSW). In terms of domain architecture, PB1 spans 613-693 (PGQCKVFVES…RKLRILTDAG (81 aa)).

The protein belongs to the ARF family. In terms of assembly, homodimers and heterodimers.

It is found in the nucleus. Auxin response factors (ARFs) are transcriptional factors that bind specifically to the DNA sequence 5'-TGTCTC-3' found in the auxin-responsive promoter elements (AuxREs). The polypeptide is Auxin response factor 10 (ARF10) (Oryza sativa subsp. indica (Rice)).